The chain runs to 162 residues: Shikimate kinase (162 aa).

11-16 (GSGKSS) is an ATP binding site. Ser15 lines the Mg(2+) pocket. Residues Asp33, Arg57, and Gly80 each contribute to the substrate site. Arg116 serves as a coordination point for ATP. Residue Arg132 coordinates substrate.

The protein belongs to the shikimate kinase family. In terms of assembly, monomer. Requires Mg(2+) as cofactor.

Its subcellular location is the cytoplasm. It catalyses the reaction shikimate + ATP = 3-phosphoshikimate + ADP + H(+). Its pathway is metabolic intermediate biosynthesis; chorismate biosynthesis; chorismate from D-erythrose 4-phosphate and phosphoenolpyruvate: step 5/7. Functionally, catalyzes the specific phosphorylation of the 3-hydroxyl group of shikimic acid using ATP as a cosubstrate. This is Shikimate kinase from Helicobacter acinonychis (strain Sheeba).